The sequence spans 710 residues: Secretin OutD (710 aa).

The N-terminal stretch at 1-27 is a signal peptide; sequence MLGKGIKKSWGWLGLTVLLLGSPCGWA. Residues 28–105 form an N0 region; that stretch reads AEFSASFKGT…DNGVLKVIRS (78 aa). The segment at 123–190 is N1; that stretch reads IGDELVTRVV…DIVNTVDKTG (68 aa). The N2 stretch occupies residues 192-262; it reads REMVTVPLTY…VEMIRQLDRK (71 aa). The interval 288-399 is N3; that stretch reads GNGTSGNRNS…INQLDIRRPQ (112 aa). Positions 289–353 are disordered; the sequence is NGTSGNRNSS…AFGSTSSSGG (65 aa). A secretin region spans residues 401–648; the sequence is LVEAIIAEIQ…MLFLRPTIIR (248 aa). Residues 691–710 are s domain; sequence TYTFRQVQSSISDFYKPEGR.

Belongs to the bacterial secretin family. GSP D subfamily. Forms a cylindrical channel with 15 subunits. Interacts with pilotin OutS.

Its subcellular location is the cell outer membrane. Functionally, involved in a type II secretion system (T2SS, formerly general secretion pathway, GSP) for the export of proteins. Required for the translocation of the multiple pectic enzymes. This subunit forms the outer membrane channel. This chain is Secretin OutD (outD), found in Dickeya dadantii (strain 3937) (Erwinia chrysanthemi (strain 3937)).